We begin with the raw amino-acid sequence, 354 residues long: Putative succinyl-diaminopimelate desuccinylase DapE (354 aa).

Zn(2+) is bound at residue His69. The active site involves Asp71. Residue Asp95 participates in Zn(2+) binding. Glu125 functions as the Proton acceptor in the catalytic mechanism. Residues Glu126, Glu154, and His330 each contribute to the Zn(2+) site.

Belongs to the peptidase M20A family. As to quaternary structure, homodimer. The cofactor is Zn(2+). It depends on Co(2+) as a cofactor.

It catalyses the reaction N-succinyl-(2S,6S)-2,6-diaminopimelate + H2O = (2S,6S)-2,6-diaminopimelate + succinate. Its pathway is amino-acid biosynthesis; L-lysine biosynthesis via DAP pathway; LL-2,6-diaminopimelate from (S)-tetrahydrodipicolinate (succinylase route): step 3/3. Catalyzes the hydrolysis of N-succinyl-L,L-diaminopimelic acid (SDAP), forming succinate and LL-2,6-diaminoheptanedioate (DAP), an intermediate involved in the bacterial biosynthesis of lysine and meso-diaminopimelic acid. The polypeptide is Putative succinyl-diaminopimelate desuccinylase DapE (dapE) (Mycobacterium tuberculosis (strain CDC 1551 / Oshkosh)).